Here is a 201-residue protein sequence, read N- to C-terminus: Cytochrome c oxidase assembly protein CtaG (201 aa).

The Cytoplasmic portion of the chain corresponds to 1-13 (MTDQGENEKKQRR). A helical; Signal-anchor for type II membrane protein membrane pass occupies residues 14–36 (SNATIAVACLSFFVCMIGAAYAS). Topologically, residues 37–201 (VPLYRIFCQV…KAVGSTRNGG (165 aa)) are periplasmic.

The protein belongs to the COX11/CtaG family.

The protein localises to the cell inner membrane. Its function is as follows. Exerts its effect at some terminal stage of cytochrome c oxidase synthesis, probably by being involved in the insertion of the copper B into subunit I. The chain is Cytochrome c oxidase assembly protein CtaG from Brucella ovis (strain ATCC 25840 / 63/290 / NCTC 10512).